Reading from the N-terminus, the 152-residue chain is Nucleoside diphosphate kinase (152 aa).

Residues lysine 11, phenylalanine 59, arginine 87, threonine 93, arginine 104, and asparagine 114 each contribute to the ATP site. Histidine 117 acts as the Pros-phosphohistidine intermediate in catalysis.

This sequence belongs to the NDK family. In terms of assembly, homotetramer. Requires Mg(2+) as cofactor.

It localises to the cytoplasm. It catalyses the reaction a 2'-deoxyribonucleoside 5'-diphosphate + ATP = a 2'-deoxyribonucleoside 5'-triphosphate + ADP. It carries out the reaction a ribonucleoside 5'-diphosphate + ATP = a ribonucleoside 5'-triphosphate + ADP. In terms of biological role, major role in the synthesis of nucleoside triphosphates other than ATP. The ATP gamma phosphate is transferred to the NDP beta phosphate via a ping-pong mechanism, using a phosphorylated active-site intermediate. In Prochlorococcus marinus (strain MIT 9301), this protein is Nucleoside diphosphate kinase.